A 1337-amino-acid chain; its full sequence is ATP-dependent helicase/nuclease subunit A (1337 aa).

In terms of domain architecture, UvrD-like helicase ATP-binding spans 3–484 (FTPSKEQEPA…LDLSDNYRSR (482 aa)). 24–31 (ASAGSGKT) serves as a coordination point for ATP. The UvrD-like helicase C-terminal domain maps to 522-867 (ADRDQASPAT…NVMTIHKSKG (346 aa)).

This sequence belongs to the helicase family. AddA subfamily. In terms of assembly, heterodimer of AddA and AddB/RexB. Mg(2+) is required as a cofactor.

It catalyses the reaction Couples ATP hydrolysis with the unwinding of duplex DNA by translocating in the 3'-5' direction.. The catalysed reaction is ATP + H2O = ADP + phosphate + H(+). In terms of biological role, the heterodimer acts as both an ATP-dependent DNA helicase and an ATP-dependent, dual-direction single-stranded exonuclease. Recognizes the chi site generating a DNA molecule suitable for the initiation of homologous recombination. The AddA nuclease domain is required for chi fragment generation; this subunit has the helicase and 3' -&gt; 5' nuclease activities. The chain is ATP-dependent helicase/nuclease subunit A from Limosilactobacillus fermentum (strain NBRC 3956 / LMG 18251) (Lactobacillus fermentum).